Here is a 479-residue protein sequence, read N- to C-terminus: Membrane-bound lytic murein transglycosylase F (479 aa).

The N-terminal stretch at 1–15 (MKRLLLVLCYITLLA) is a signal peptide. The tract at residues 16 to 258 (GCQKVVVEQE…HLNEKYFAHV (243 aa)) is non-LT domain. The tract at residues 260–479 (RFDYVDTRAF…QTDAIQPQQP (220 aa)) is LT domain. Residue E303 is part of the active site. Residues 457–479 (LQTAEAKETEEKPQTDAIQPQQP) form a disordered region. The segment covering 461–470 (EAKETEEKPQ) has biased composition (basic and acidic residues).

This sequence in the N-terminal section; belongs to the bacterial solute-binding protein 3 family. In the C-terminal section; belongs to the transglycosylase Slt family.

Its subcellular location is the cell outer membrane. It carries out the reaction Exolytic cleavage of the (1-&gt;4)-beta-glycosidic linkage between N-acetylmuramic acid (MurNAc) and N-acetylglucosamine (GlcNAc) residues in peptidoglycan, from either the reducing or the non-reducing ends of the peptidoglycan chains, with concomitant formation of a 1,6-anhydrobond in the MurNAc residue.. Murein-degrading enzyme that degrades murein glycan strands and insoluble, high-molecular weight murein sacculi, with the concomitant formation of a 1,6-anhydromuramoyl product. Lytic transglycosylases (LTs) play an integral role in the metabolism of the peptidoglycan (PG) sacculus. Their lytic action creates space within the PG sacculus to allow for its expansion as well as for the insertion of various structures such as secretion systems and flagella. This is Membrane-bound lytic murein transglycosylase F from Shewanella pealeana (strain ATCC 700345 / ANG-SQ1).